Here is a 122-residue protein sequence, read N- to C-terminus: Large ribosomal subunit protein uL14c (122 aa).

Belongs to the universal ribosomal protein uL14 family. As to quaternary structure, part of the 50S ribosomal subunit.

Its subcellular location is the plastid. Functionally, binds to 23S rRNA. The polypeptide is Large ribosomal subunit protein uL14c (Cuscuta gronovii (Common dodder)).